The chain runs to 427 residues: Enolase (427 aa).

Position 163 (Gln-163) interacts with (2R)-2-phosphoglycerate. The Proton donor role is filled by Glu-205. 3 residues coordinate Mg(2+): Asp-242, Glu-283, and Asp-310. (2R)-2-phosphoglycerate-binding residues include Lys-335, Arg-364, Ser-365, and Lys-386. The active-site Proton acceptor is the Lys-335.

This sequence belongs to the enolase family. Mg(2+) serves as cofactor.

The protein localises to the cytoplasm. It localises to the secreted. It is found in the cell surface. The enzyme catalyses (2R)-2-phosphoglycerate = phosphoenolpyruvate + H2O. The protein operates within carbohydrate degradation; glycolysis; pyruvate from D-glyceraldehyde 3-phosphate: step 4/5. Catalyzes the reversible conversion of 2-phosphoglycerate (2-PG) into phosphoenolpyruvate (PEP). It is essential for the degradation of carbohydrates via glycolysis. This chain is Enolase, found in Salinispora arenicola (strain CNS-205).